A 252-amino-acid chain; its full sequence is Probable transcriptional regulatory protein Kole_1935 (252 aa).

This sequence belongs to the TACO1 family.

Its subcellular location is the cytoplasm. The polypeptide is Probable transcriptional regulatory protein Kole_1935 (Kosmotoga olearia (strain ATCC BAA-1733 / DSM 21960 / TBF 19.5.1)).